The chain runs to 260 residues: Ribosomal RNA small subunit methyltransferase G (260 aa).

Residues G94, F99, 117–119, 145–146, and R164 each bind S-adenosyl-L-methionine; these read DSS and AE.

This sequence belongs to the methyltransferase superfamily. RNA methyltransferase RsmG family.

The protein resides in the cytoplasm. Its function is as follows. Specifically methylates the N7 position of a guanine in 16S rRNA. The polypeptide is Ribosomal RNA small subunit methyltransferase G (Synechococcus sp. (strain JA-3-3Ab) (Cyanobacteria bacterium Yellowstone A-Prime)).